Consider the following 83-residue polypeptide: Kunitz-type serine protease inhibitor A (83 aa).

The signal sequence occupies residues 1–24 (MSSGGLLLLLGLLTLCAELTPVSS). The BPTI/Kunitz inhibitor domain occupies 31-81 (CNVPPEPGRCNANVRAFYYNPRLRKCIEFTYGGCGGNANNFKSRGECKRTC). Cystine bridges form between C31-C81, C40-C64, and C56-C77.

This sequence belongs to the venom Kunitz-type family. Expressed by the venom gland.

Its subcellular location is the secreted. In terms of biological role, serine protease inhibitor. The protein is Kunitz-type serine protease inhibitor A of Bungarus candidus (Malayan krait).